Reading from the N-terminus, the 370-residue chain is tRNA/tmRNA (uracil-C(5))-methyltransferase (370 aa).

S-adenosyl-L-methionine is bound by residues Gln195, Tyr221, Asn226, Glu242, and Asp302. The active-site Nucleophile is Cys327. The active-site Proton acceptor is the Glu361.

This sequence belongs to the class I-like SAM-binding methyltransferase superfamily. RNA M5U methyltransferase family. TrmA subfamily.

It carries out the reaction uridine(54) in tRNA + S-adenosyl-L-methionine = 5-methyluridine(54) in tRNA + S-adenosyl-L-homocysteine + H(+). It catalyses the reaction uridine(341) in tmRNA + S-adenosyl-L-methionine = 5-methyluridine(341) in tmRNA + S-adenosyl-L-homocysteine + H(+). Dual-specificity methyltransferase that catalyzes the formation of 5-methyluridine at position 54 (m5U54) in all tRNAs, and that of position 341 (m5U341) in tmRNA (transfer-mRNA). In Wolinella succinogenes (strain ATCC 29543 / DSM 1740 / CCUG 13145 / JCM 31913 / LMG 7466 / NCTC 11488 / FDC 602W) (Vibrio succinogenes), this protein is tRNA/tmRNA (uracil-C(5))-methyltransferase.